Consider the following 95-residue polypeptide: Protein RnfH (95 aa).

It belongs to the UPF0125 (RnfH) family.

The sequence is that of Protein RnfH from Methylococcus capsulatus (strain ATCC 33009 / NCIMB 11132 / Bath).